The sequence spans 320 residues: MQNIPTGVILLNMGGPTQTKDVRPFLYNLFSDREIIPLGPRLMQKPLAWLIAKRRAPKSAATYERIGGGSPLKQITEAQAEALEKSLQAHGNFTVTYAMRYWPPYCDEALDYLLSKGVERLVALSLYPHYSKATTGSSLTQLHKTLKKKNISLPLTEIPSWPKQRDYIAAIAANIKKGLATFHGEKTEIVYSAHSLPTSFIEAGDPYVEHTKQSIGAIEEITGKRGRLCFQSKSGPVEWLEPSTPDVLIQLAQEGVKNILMVPISFVSDHVETLYEIDILYKKQAKKLGMRLTSCPSLNTQEQFITGLRQLVLESSVNSD.

2 residues coordinate Fe cation: His-194 and Glu-272.

This sequence belongs to the ferrochelatase family.

It localises to the cytoplasm. It catalyses the reaction heme b + 2 H(+) = protoporphyrin IX + Fe(2+). Its pathway is porphyrin-containing compound metabolism; protoheme biosynthesis; protoheme from protoporphyrin-IX: step 1/1. Its function is as follows. Catalyzes the ferrous insertion into protoporphyrin IX. The protein is Ferrochelatase of Desulfotalea psychrophila (strain LSv54 / DSM 12343).